Here is a 609-residue protein sequence, read N- to C-terminus: Glutamine--fructose-6-phosphate aminotransferase [isomerizing] (609 aa).

The active-site Nucleophile; for GATase activity is cysteine 2. Positions 2 to 218 (CGIVGAIAQR…EGDIAEITRR (217 aa)) constitute a Glutamine amidotransferase type-2 domain. SIS domains are found at residues 286–426 (ADEL…LKGL) and 458–599 (LAED…VDQP). Residue lysine 604 is the For Fru-6P isomerization activity of the active site.

As to quaternary structure, homodimer.

Its subcellular location is the cytoplasm. The enzyme catalyses D-fructose 6-phosphate + L-glutamine = D-glucosamine 6-phosphate + L-glutamate. In terms of biological role, catalyzes the first step in hexosamine metabolism, converting fructose-6P into glucosamine-6P using glutamine as a nitrogen source. The polypeptide is Glutamine--fructose-6-phosphate aminotransferase [isomerizing] (Salmonella typhimurium (strain LT2 / SGSC1412 / ATCC 700720)).